Reading from the N-terminus, the 1764-residue chain is Latent-transforming growth factor beta-binding protein 2 (1764 aa).

The signal sequence occupies residues 1 to 35; that stretch reads MRAPTTVRCSGRIQRARWRGFLPLVLALLMGTSHA. Positions 80-140 are disordered; sequence PGLSPSEWNQ…PPAARTAHSV (61 aa). The segment at 94 to 115 is heparin-binding; it reads IPGRLAEAEARRPSRAQQLRRV. Residues 108 to 128 show a composition bias toward polar residues; it reads RAQQLRRVQSPVQTRRSNPRG. The N-linked (GlcNAc...) asparagine glycan is linked to Asn175. In terms of domain architecture, EGF-like 1 spans 181–213; that stretch reads IKPVCQPPCQNRGSCSRPQLCICRSGFRGARCE. Cystine bridges form between Cys185–Cys195, Cys189–Cys201, and Cys203–Cys212. Residues 220–279 form a disordered region; sequence EFDPQNARPVPRRSVEGAPGPHRSSEARGSLVTRIQPLLPPLPPPPSRTLSQTRPLQQHA. The interval 226-243 is heparin-binding; sequence ARPVPRRSVEGAPGPHRS. Positions 257-266 are enriched in pro residues; sequence LLPPLPPPPS. Asn330 carries an N-linked (GlcNAc...) asparagine glycan. 331–341 contributes to the heparin binding site; sequence LTEKIKKIKVV. In terms of domain architecture, EGF-like 2 spans 383 to 415; that stretch reads RIYFCQIPCLNGGRCIGRDECWCPANSTGKFCH. 3 disulfide bridges follow: Cys387-Cys397, Cys391-Cys403, and Cys405-Cys414. Asn408 carries an N-linked (GlcNAc...) asparagine glycan. The interval 484-529 is disordered; sequence EVDPVPEDNSVETRASHRPHGSSGHSHWASNSIPARAGEAPRPPPV. Position 493 is a phosphoserine (Ser493). A TB 1 domain is found at 538-590; that stretch reads GQCYLSTVNGQCANPLGELTSQEDCCGSVGTSWGVTSCAPCPPRPAFPVIENG. 3 cysteine pairs are disulfide-bonded: Cys540-Cys562, Cys549-Cys575, and Cys563-Cys578. Asn602 carries an N-linked (GlcNAc...) asparagine glycan. One can recognise an EGF-like 3; calcium-binding domain in the interval 608-648; sequence DINECLTLGLCKDSECVNTRGSYLCTCRPGLMLDPSRSRCV. Cystine bridges form between Cys612–Cys623, Cys618–Cys632, Cys634–Cys647, Cys660–Cys682, Cys669–Cys695, Cys683–Cys698, and Cys684–Cys710. Residues 658–710 form the TB 2 domain; sequence GLCYRSMVSGTCTLPLVQRITKQICCCSRVGKAWGSKCEHCPLPGTEAFREIC. Disordered stretches follow at residues 729-759 and 786-809; these read KAEE…RQPL and SAPH…LPGQ. Positions 834–876 constitute an EGF-like 4 domain; that stretch reads GFDPCFAGASNICGPGTCVKLPNGYRCVCSPGYQLHPSQDYCT. Disulfide bonds link Cys838/Cys851, Cys846/Cys860, Cys862/Cys875, Cys881/Cys892, Cys886/Cys901, Cys903/Cys918, Cys924/Cys935, Cys930/Cys944, Cys946/Cys958, Cys964/Cys975, Cys970/Cys984, Cys987/Cys998, Cys1004/Cys1015, Cys1010/Cys1024, Cys1026/Cys1039, Cys1045/Cys1056, Cys1051/Cys1065, Cys1068/Cys1081, Cys1087/Cys1098, Cys1093/Cys1107, Cys1110/Cys1123, Cys1129/Cys1141, Cys1136/Cys1150, Cys1152/Cys1164, Cys1170/Cys1182, Cys1176/Cys1191, Cys1193/Cys1206, Cys1212/Cys1223, Cys1218/Cys1232, Cys1234/Cys1247, Cys1253/Cys1265, Cys1259/Cys1274, Cys1276/Cys1289, Cys1295/Cys1307, Cys1302/Cys1316, Cys1318/Cys1332, Cys1359/Cys1382, Cys1369/Cys1394, Cys1383/Cys1397, Cys1435/Cys1448, Cys1443/Cys1457, Cys1459/Cys1472, Cys1478/Cys1488, Cys1483/Cys1497, and Cys1499/Cys1512. An EGF-like 5; calcium-binding domain is found at 877–919; sequence DDNECLRNPCEGRGRCVNSVGSYSCLCYPGYTLATLGDTQECQ. The 40-residue stretch at 920-959 folds into the EGF-like 6; calcium-binding domain; sequence DVDECEQPGVCSGGRCSNTEGSYHCECDQGYVMVRRGHCQ. The region spanning 960–999 is the EGF-like 7; calcium-binding domain; the sequence is DINECRHPGTCPDGRCVNSPGSYTCLACEEGYIGQSGNCV. One can recognise an EGF-like 8; calcium-binding domain in the interval 1000–1040; it reads DMNECLTPGICAHGRCINMEGSFRCSCEPGYELTPDKKGCR. The 42-residue stretch at 1041–1082 folds into the EGF-like 9; calcium-binding domain; that stretch reads DVDECASRASCPTGLCLNTEGSFTCSACQSGYWVNEDGTACE. The region spanning 1083-1124 is the EGF-like 10; calcium-binding domain; sequence DLDECAFPGVCPTGVCTNTVGSFSCKDCDRGFRPSPLGNSCE. Residues 1125–1165 enclose the EGF-like 11; calcium-binding domain; sequence DVDECEGPQNSCLGGECKNTDGSYQCLCPQGFQLANGTVCE. A glycan (N-linked (GlcNAc...) asparagine) is linked at Asn1160. One can recognise an EGF-like 12; calcium-binding domain in the interval 1166 to 1207; sequence DVDECVGEEHCAPHGECLNSPGSFFCLCAPGFASAEGGTRCQ. The region spanning 1208–1248 is the EGF-like 13; calcium-binding domain; that stretch reads DVDECATTEPCLGGHCVNTEGSFNCLCETGFQPAPDSGECV. One can recognise an EGF-like 15; calcium-binding domain in the interval 1249–1290; it reads DIDECANDTVCGNHGFCDNTDGSFRCLCDQGFETSPSGWECV. A glycan (N-linked (GlcNAc...) asparagine) is linked at Asn1255. Positions 1291-1333 constitute an EGF-like 16; calcium-binding domain; that stretch reads DVNECELMLAVCGDALCENVEGSFLCLCASDLEEYDAEEGHCR. Residues 1357–1409 form the TB 3 domain; the sequence is MECYAEHNGGPPCSQILGQNSTQAECCSTQGARWGETCDPCPSEDSVEFSELC. Asn1376 carries N-linked (GlcNAc...) asparagine glycosylation. In terms of domain architecture, EGF-like 17; calcium-binding spans 1431 to 1473; sequence DADECILFGPALCQNGRCLNTVPGYICLCNPGYHYDAVSRKCQ. The EGF-like 18; calcium-binding domain maps to 1474 to 1513; that stretch reads DHNECQDLACENGECVNTEGSFHCFCSPPLILDLSGQRCV. Residue Asn1514 is glycosylated (N-linked (GlcNAc...) asparagine). The 53-residue stretch at 1530–1582 folds into the TB 4 domain; sequence DICWKKVTNDVCSQPLRGHHTTYTECCCQDGEAWSQQCALCPPRSSEVYAQLC. Cystine bridges form between Cys1532–Cys1555, Cys1541–Cys1567, Cys1556–Cys1570, Cys1557–Cys1582, Cys1680–Cys1691, Cys1686–Cys1700, Cys1702–Cys1715, Cys1721–Cys1736, Cys1731–Cys1745, and Cys1747–Cys1760. Residues 1585 to 1764 form a C-terminal domain region; sequence ARIEAEREAG…PGPPHCAAKE (180 aa). The region spanning 1676–1716 is the EGF-like 19; calcium-binding domain; it reads QAEECGILNGCENGRCVRVREGYTCDCFEGFQLDTALMACV. The EGF-like 20; calcium-binding domain occupies 1717-1761; the sequence is DVNECEDLNGAARLCAHGHCENTEGSYRCHCSPGYVAEPGPPHCA.

Belongs to the LTBP family. Forms part of the large latent transforming growth factor beta precursor complex; removal is essential for activation of complex. Interacts with SDC4. Interacts (via C-terminal domain) with FBN1 (via N-terminal domain) in a Ca(+2)-dependent manner. N-Glycosylated. In terms of processing, contains hydroxylated asparagine residues. Expressed in cortical astrocytes and glioma cells. Expression is up-regulated by TGFB1.

It localises to the secreted. It is found in the extracellular space. Its subcellular location is the extracellular matrix. Functionally, may play an integral structural role in elastic-fiber architectural organization and/or assembly. This Rattus norvegicus (Rat) protein is Latent-transforming growth factor beta-binding protein 2 (Ltbp2).